Reading from the N-terminus, the 138-residue chain is Unique cartilage matrix-associated protein (138 aa).

The N-terminal stretch at 1–26 (MKRNQVLFLTCAAAVVFLAVLHVGES) is a signal peptide. The propeptide at 28 to 64 (AVRSKDDPAPDKKESLKSKIFMQGSEASNFFKKRGKR) is ucma-N. A disordered region spans residues 58-116 (FKKRGKRSPKSQDEINAENRQRLSADERRREYYEEQRNEFENHVEEEQDEQEERSREQI). The span at 67–102 (KSQDEINAENRQRLSADERRREYYEEQRNEFENHVE) shows a compositional bias: basic and acidic residues. Positions 69–118 (QDEINAENRQRLSADERRREYYEEQRNEFENHVEEEQDEQEERSREQIEQ) form a coiled coil. Residues Glu-71, Glu-75, Glu-84, Glu-88, Glu-91, Glu-92, Glu-96, Glu-98, Glu-102, Glu-103, Glu-107, Glu-110, Glu-114, and Glu-117 each carry the 4-carboxyglutamate modification.

This sequence belongs to the UCMA family. In terms of processing, proteolytically cleaved by a furin-like convertase to generate a persistent C-terminal fragment found in almost the entire cartilage matrix, and affecting osteoblast differentiation. Sulfated on tyrosine residues.

It localises to the secreted. Its subcellular location is the extracellular space. It is found in the extracellular matrix. May be involved in the negative control of osteogenic differentiation of osteochondrogenic precursor cells in peripheral zones of fetal cartilage and at the cartilage-bone interface. In Xenopus tropicalis (Western clawed frog), this protein is Unique cartilage matrix-associated protein (ucma).